Reading from the N-terminus, the 98-residue chain is NADH-ubiquinone oxidoreductase chain 4L (98 aa).

3 consecutive transmembrane segments (helical) span residues 1–21, 29–49, and 61–81; these read MTLI…GLLM, ALLC…LTIL, and IILL…LVMV.

This sequence belongs to the complex I subunit 4L family. In terms of assembly, core subunit of respiratory chain NADH dehydrogenase (Complex I) which is composed of 45 different subunits.

Its subcellular location is the mitochondrion inner membrane. The catalysed reaction is a ubiquinone + NADH + 5 H(+)(in) = a ubiquinol + NAD(+) + 4 H(+)(out). Core subunit of the mitochondrial membrane respiratory chain NADH dehydrogenase (Complex I) which catalyzes electron transfer from NADH through the respiratory chain, using ubiquinone as an electron acceptor. Part of the enzyme membrane arm which is embedded in the lipid bilayer and involved in proton translocation. This Megaptera novaeangliae (Humpback whale) protein is NADH-ubiquinone oxidoreductase chain 4L (MT-ND4L).